Consider the following 635-residue polypeptide: Glycosyltransferase-like protein gnt13 (635 aa).

The Cytoplasmic segment spans residues Met1–Asn18. A helical; Signal-anchor for type II membrane protein membrane pass occupies residues Phe19–Leu38. Topologically, residues Met39–Trp635 are extracellular. Residues Asn41 and Asn179 are each glycosylated (N-linked (GlcNAc...) asparagine). Disordered regions lie at residues Asn300–Asp358 and Asn389–Pro458. Positions Asn389–Asn456 are enriched in low complexity. Residues Asn393 and Asn535 are each glycosylated (N-linked (GlcNAc...) asparagine).

Belongs to the glycosyltransferase 8 family. Highly divergent.

The protein resides in the membrane. The polypeptide is Glycosyltransferase-like protein gnt13 (gnt13) (Dictyostelium discoideum (Social amoeba)).